The sequence spans 616 residues: Xaa-Pro aminopeptidase app-1 (616 aa).

Positions 78 and 392 each coordinate a peptide. Zn(2+) is bound by residues aspartate 413, aspartate 424, and histidine 487. Positions 487, 496, and 522 each coordinate a peptide. The Zn(2+) site is built by glutamate 522 and glutamate 536.

This sequence belongs to the peptidase M24B family. Homodimer. May interact with pid-2, pid-4 and pid-5. Zn(2+) is required as a cofactor. Specifically expressed in the intestine.

The protein resides in the cytoplasm. It catalyses the reaction Release of any N-terminal amino acid, including proline, that is linked to proline, even from a dipeptide or tripeptide.. Strongly inhibited by the metal ion chelators EDTA and 1,10-phenanthroline. Also inhibited by apstatin. Activity towards bradykinin is inhibited by Mn(2+) and Zn(2+) at all concentrations tested, whereas Co(2+) is inhibitory at concentrations above 100 uM and activatory at 10 uM. Functionally, catalyzes the removal of a penultimate prolyl residue from the N-termini of peptides, such as Arg-Pro-Pro. Has activity towards the flp-9 neuropeptide KPSFVRF-amide. This Caenorhabditis elegans protein is Xaa-Pro aminopeptidase app-1.